Consider the following 130-residue polypeptide: Glycine cleavage system H protein (130 aa).

In terms of domain architecture, Lipoyl-binding spans 25–107 (IATIGITEFA…YGEGWFLKVR (83 aa)). Lys-66 is subject to N6-lipoyllysine.

Belongs to the GcvH family. As to quaternary structure, the glycine cleavage system is composed of four proteins: P, T, L and H. (R)-lipoate serves as cofactor.

In terms of biological role, the glycine cleavage system catalyzes the degradation of glycine. The H protein shuttles the methylamine group of glycine from the P protein to the T protein. The polypeptide is Glycine cleavage system H protein (Nostoc sp. (strain PCC 7120 / SAG 25.82 / UTEX 2576)).